We begin with the raw amino-acid sequence, 530 residues long: T-complex protein 1 subunit zeta-2 (530 aa).

This sequence belongs to the TCP-1 chaperonin family. In terms of assembly, component of the chaperonin-containing T-complex (TRiC), a heterooligomeric complex of about 850 to 900 kDa that forms two stacked rings, 12 to 16 nm in diameter. Testis-specific.

It is found in the cytoplasm. Functionally, component of the chaperonin-containing T-complex (TRiC), a molecular chaperone complex that assists the folding of proteins upon ATP hydrolysis. The protein is T-complex protein 1 subunit zeta-2 (CCT6B) of Homo sapiens (Human).